The primary structure comprises 129 residues: D-ribose pyranase (129 aa).

His-20 (proton donor) is an active-site residue. Residues Asp-28, His-96, and 118–120 each bind substrate; that span reads YAN.

It belongs to the RbsD / FucU family. RbsD subfamily. As to quaternary structure, homodecamer.

It is found in the cytoplasm. The catalysed reaction is beta-D-ribopyranose = beta-D-ribofuranose. It functions in the pathway carbohydrate metabolism; D-ribose degradation; D-ribose 5-phosphate from beta-D-ribopyranose: step 1/2. Functionally, catalyzes the interconversion of beta-pyran and beta-furan forms of D-ribose. The protein is D-ribose pyranase of Exiguobacterium sp. (strain ATCC BAA-1283 / AT1b).